We begin with the raw amino-acid sequence, 145 residues long: Deoxyuridine 5'-triphosphate nucleotidohydrolase (145 aa).

Substrate contacts are provided by residues 62–64 (RSG), Asn-75, and 79–81 (TVD).

Belongs to the dUTPase family. The cofactor is Mg(2+).

The catalysed reaction is dUTP + H2O = dUMP + diphosphate + H(+). Its pathway is pyrimidine metabolism; dUMP biosynthesis; dUMP from dCTP (dUTP route): step 2/2. This enzyme is involved in nucleotide metabolism: it produces dUMP, the immediate precursor of thymidine nucleotides and it decreases the intracellular concentration of dUTP so that uracil cannot be incorporated into DNA. This chain is Deoxyuridine 5'-triphosphate nucleotidohydrolase, found in Gloeothece citriformis (strain PCC 7424) (Cyanothece sp. (strain PCC 7424)).